A 533-amino-acid polypeptide reads, in one-letter code: SH3 and F-BAR domain-containing protein DDB_G0271676 (533 aa).

Positions 5-258 (RQFSEDLWDK…GIESIDRERD (254 aa)) constitute an F-BAR domain. The stretch at 76–186 (REQLELIGAL…ADKGDNEYRE (111 aa)) forms a coiled coil. Basic and acidic residues-rich tracts occupy residues 126 to 155 (LKTA…EDLS) and 162 to 184 (KEQK…DNEY). Disordered stretches follow at residues 126–184 (LKTA…DNEY) and 301–405 (SRKS…INSN). Low complexity-rich tracts occupy residues 318-327 (SIISSPQQPQ), 340-360 (NIII…NNSN), 372-385 (PQQQ…QLNN), and 392-405 (SLSK…INSN). SH3 domains lie at 406–468 (SNGE…DSSD) and 476–533 (VAGR…VQVI).

This chain is SH3 and F-BAR domain-containing protein DDB_G0271676, found in Dictyostelium discoideum (Social amoeba).